We begin with the raw amino-acid sequence, 91 residues long: Small ribosomal subunit protein bS20 (91 aa).

Residues 1–18 (MPLHKSAEKRLRQSERRN) show a composition bias toward basic and acidic residues. The interval 1 to 26 (MPLHKSAEKRLRQSERRNARNRSRKK) is disordered.

It belongs to the bacterial ribosomal protein bS20 family.

In terms of biological role, binds directly to 16S ribosomal RNA. This chain is Small ribosomal subunit protein bS20, found in Pelodictyon phaeoclathratiforme (strain DSM 5477 / BU-1).